The chain runs to 729 residues: Cytoplasmic polyadenylation element-binding protein 4 (729 aa).

Disordered regions lie at residues 20 to 49 (FPVRFHPHLQPPHHHQNATPSPAAFINNNT) and 78 to 133 (EKAK…KEKI). Residues 24-35 (FHPHLQPPHHHQ) show a composition bias toward basic residues. Over residues 83–96 (QQQEQQDPLEKQQL) the composition is skewed to low complexity. S97, S99, and S137 each carry phosphoserine. Positions 218–328 (FGGSFSPQIG…RGLNGGITPL (111 aa)) are disordered. Residues 232-249 (HHPHHPHFQHHHSQHQQQ) show a composition bias toward basic residues. 2 positions are modified to phosphoserine: S252 and S255. Positions 285-300 (WSSYQSPSPTPSSSWS) are enriched in low complexity. The span at 301–313 (PGGGGYGGWGGSQ) shows a compositional bias: gly residues. T326 bears the Phosphothreonine mark. Residues S330 and S332 each carry the phosphoserine modification. 2 RRM domains span residues 472-563 (RKVF…PWNL) and 580-662 (KTIF…PYVL). Residues 541 to 543 (KLY) form an RNA-binding region. Zn(2+)-binding residues include C667, C675, C684, C689, C694, C697, H702, and H710.

It belongs to the RRM CPEB family. Interacts with TOB1. In terms of tissue distribution, expressed in pancreas in islets and ductal cells (at protein level). Expressed in melanocytes.

It localises to the cytoplasm. Its subcellular location is the cell projection. The protein resides in the dendrite. The protein localises to the dendritic spine. It is found in the postsynaptic density. It localises to the axon. Its subcellular location is the growth cone. The protein resides in the endoplasmic reticulum. The protein localises to the perinuclear region. Its function is as follows. Sequence-specific RNA-binding protein that binds to the cytoplasmic polyadenylation element (CPE), an uridine-rich sequence element (consensus sequence 5'-UUUUUAU-3') within the mRNA 3'-UTR. RNA binding results in a clear conformational change analogous to the Venus fly trap mechanism. Regulates activation of unfolded protein response (UPR) in the process of adaptation to ER stress in liver, by maintaining translation of CPE-regulated mRNAs in conditions in which global protein synthesis is inhibited. Required for cell cycle progression, specifically for cytokinesis and chromosomal segregation. Plays a role as an oncogene promoting tumor growth and progression by positively regulating translation of t-plasminogen activator/PLAT. Stimulates proliferation of melanocytes. In contrast to CPEB1 and CPEB3, does not play role in synaptic plasticity, learning and memory. The sequence is that of Cytoplasmic polyadenylation element-binding protein 4 (CPEB4) from Homo sapiens (Human).